A 342-amino-acid chain; its full sequence is UDP-N-acetylglucosamine--N-acetylmuramyl-(pentapeptide) pyrophosphoryl-undecaprenol N-acetylglucosamine transferase (342 aa).

UDP-N-acetyl-alpha-D-glucosamine is bound by residues 10-12 (TGG), asparagine 124, serine 177, and glutamine 275.

Belongs to the glycosyltransferase 28 family. MurG subfamily.

The protein resides in the cell inner membrane. It carries out the reaction di-trans,octa-cis-undecaprenyl diphospho-N-acetyl-alpha-D-muramoyl-L-alanyl-D-glutamyl-meso-2,6-diaminopimeloyl-D-alanyl-D-alanine + UDP-N-acetyl-alpha-D-glucosamine = di-trans,octa-cis-undecaprenyl diphospho-[N-acetyl-alpha-D-glucosaminyl-(1-&gt;4)]-N-acetyl-alpha-D-muramoyl-L-alanyl-D-glutamyl-meso-2,6-diaminopimeloyl-D-alanyl-D-alanine + UDP + H(+). The protein operates within cell wall biogenesis; peptidoglycan biosynthesis. Its function is as follows. Cell wall formation. Catalyzes the transfer of a GlcNAc subunit on undecaprenyl-pyrophosphoryl-MurNAc-pentapeptide (lipid intermediate I) to form undecaprenyl-pyrophosphoryl-MurNAc-(pentapeptide)GlcNAc (lipid intermediate II). The chain is UDP-N-acetylglucosamine--N-acetylmuramyl-(pentapeptide) pyrophosphoryl-undecaprenol N-acetylglucosamine transferase from Campylobacter jejuni (strain RM1221).